Here is a 576-residue protein sequence, read N- to C-terminus: Arginine--tRNA ligase (576 aa).

The 'HIGH' region signature appears at 122-132; that stretch reads PNVAKEMHVGH.

It belongs to the class-I aminoacyl-tRNA synthetase family. As to quaternary structure, monomer.

It localises to the cytoplasm. It carries out the reaction tRNA(Arg) + L-arginine + ATP = L-arginyl-tRNA(Arg) + AMP + diphosphate. This Pectobacterium atrosepticum (strain SCRI 1043 / ATCC BAA-672) (Erwinia carotovora subsp. atroseptica) protein is Arginine--tRNA ligase.